A 559-amino-acid polypeptide reads, in one-letter code: Endoglin (559 aa).

The N-terminal stretch at 1–20 (MKSICCVLVLCLLLCRRSTA) is a signal peptide. Over 21–473 (SESICELKDV…SCFEFGLSAV (453 aa)) the chain is Extracellular. 2 disulfide bridges follow: cysteine 25–cysteine 201 and cysteine 47–cysteine 174. Asparagine 55, asparagine 79, asparagine 109, asparagine 133, asparagine 170, asparagine 302, and asparagine 352 each carry an N-linked (GlcNAc...) asparagine glycan. An intrachain disulfide couples cysteine 381 to cysteine 427. The chain crosses the membrane as a helical span at residues 474–494 (LGIAFGGFLIGVLLTGALWFI). Topologically, residues 495 to 559 (KIRTGHPVAL…TQSTPTSSMA (65 aa)) are cytoplasmic. Residues 528–559 (RQPVPTHPSPSENSSANASIGSTQSTPTSSMA) are disordered. The span at 536 to 546 (SPSENSSANAS) shows a compositional bias: low complexity. Polar residues predominate over residues 547–559 (IGSTQSTPTSSMA).

As to quaternary structure, homodimer; disulfide-linked.

Its subcellular location is the cell membrane. Functionally, vascular endothelium glycoprotein that plays an important role in the regulation of angiogenesis. Required for normal structure and integrity of adult vasculature. Important for endothelial cell shape changes in response to blood flow, which drive vascular remodeling and establishment of normal vascular morphology during angiogenesis. The protein is Endoglin of Danio rerio (Zebrafish).